The chain runs to 305 residues: Acetylglutamate kinase (305 aa).

Residues 80–81, R102, and N196 contribute to the substrate site; that span reads GG.

This sequence belongs to the acetylglutamate kinase family. ArgB subfamily.

The protein localises to the cytoplasm. The catalysed reaction is N-acetyl-L-glutamate + ATP = N-acetyl-L-glutamyl 5-phosphate + ADP. The protein operates within amino-acid biosynthesis; L-arginine biosynthesis; N(2)-acetyl-L-ornithine from L-glutamate: step 2/4. Its function is as follows. Catalyzes the ATP-dependent phosphorylation of N-acetyl-L-glutamate. This is Acetylglutamate kinase from Chlorobium luteolum (strain DSM 273 / BCRC 81028 / 2530) (Pelodictyon luteolum).